Reading from the N-terminus, the 117-residue chain is Large ribosomal subunit protein uL18 (117 aa).

Belongs to the universal ribosomal protein uL18 family. As to quaternary structure, part of the 50S ribosomal subunit; part of the 5S rRNA/L5/L18/L25 subcomplex. Contacts the 5S and 23S rRNAs.

This is one of the proteins that bind and probably mediate the attachment of the 5S RNA into the large ribosomal subunit, where it forms part of the central protuberance. The sequence is that of Large ribosomal subunit protein uL18 from Haemophilus influenzae (strain 86-028NP).